We begin with the raw amino-acid sequence, 367 residues long: Ribosome-binding ATPase YchF (367 aa).

Positions 2–258 (LSAGIVGLPN…LKLEQRQYFL (257 aa)) constitute an OBG-type G domain. ATP is bound at residue 11–16 (NVGKST). The Mg(2+) site is built by S15 and T35. One can recognise a TGS domain in the interval 281–364 (NLWSFFTFGK…KDGDVCNFKF (84 aa)).

This sequence belongs to the TRAFAC class OBG-HflX-like GTPase superfamily. OBG GTPase family. YchF/OLA1 subfamily. Requires Mg(2+) as cofactor.

Its function is as follows. ATPase that binds to both the 70S ribosome and the 50S ribosomal subunit in a nucleotide-independent manner. The protein is Ribosome-binding ATPase YchF of Mycoplasma genitalium (strain ATCC 33530 / DSM 19775 / NCTC 10195 / G37) (Mycoplasmoides genitalium).